Reading from the N-terminus, the 514-residue chain is Glutamyl-tRNA(Gln) amidotransferase subunit B, mitochondrial (514 aa).

The protein belongs to the GatB/GatE family. GatB subfamily. In terms of assembly, subunit of the heterotrimeric GatCAB amidotransferase (AdT) complex, composed of A, B and C subunits.

Its subcellular location is the mitochondrion. The enzyme catalyses L-glutamyl-tRNA(Gln) + L-glutamine + ATP + H2O = L-glutaminyl-tRNA(Gln) + L-glutamate + ADP + phosphate + H(+). Functionally, allows the formation of correctly charged Gln-tRNA(Gln) through the transamidation of misacylated Glu-tRNA(Gln) in the mitochondria. The reaction takes place in the presence of glutamine and ATP through an activated gamma-phospho-Glu-tRNA(Gln). This chain is Glutamyl-tRNA(Gln) amidotransferase subunit B, mitochondrial, found in Naegleria gruberi (Amoeba).